Here is a 41-residue protein sequence, read N- to C-terminus: LDGRNAAADFETSDLLAMTIRGGCCSYPPCIANNPLCGGKR.

Positions Leu1–Arg21 are excised as a propeptide. 2 disulfides stabilise this stretch: Cys24-Cys30 and Cys25-Cys37. Cysteine amide is present on Cys37. The propeptide occupies Gly38 to Arg41.

Belongs to the conotoxin A superfamily. Post-translationally, non-native isomers 'ribbon' (with disulfide connectivity C1-C4, C2-C3) and 'beads' (with disulfide connectivity C1-C2, C3-C4) also inhibit high voltage-activated (HVA) calcium channel currents in rat DRG neurons (25-30% inhibition at 1 uM toxin). In terms of processing, mutants Pu1.2(9-16), [C3S; C9S]Pu1.2 and [C4S]Pu1.2(1-9) are all C-terminally amidated. In terms of tissue distribution, expressed by the venom duct.

Its subcellular location is the secreted. Its function is as follows. Alpha-conotoxins act on postsynaptic membranes, they bind to the nicotinic acetylcholine receptors (nAChR) and thus inhibit them. This toxin also inhibits high voltage-activated (HVA) calcium channel currents in rat DRG neurons (27% inhibition at 1 uM toxin) probably by activating GABA(B) receptors (GABBR1 and/or GABBR2). In Conus pulicarius (Flea-bitten cone), this protein is Alpha-conotoxin-like Pu1.2.